Here is a 142-residue protein sequence, read N- to C-terminus: Large ribosomal subunit protein uL13 (142 aa).

This sequence belongs to the universal ribosomal protein uL13 family. As to quaternary structure, part of the 50S ribosomal subunit.

In terms of biological role, this protein is one of the early assembly proteins of the 50S ribosomal subunit, although it is not seen to bind rRNA by itself. It is important during the early stages of 50S assembly. This is Large ribosomal subunit protein uL13 from Aeromonas hydrophila subsp. hydrophila (strain ATCC 7966 / DSM 30187 / BCRC 13018 / CCUG 14551 / JCM 1027 / KCTC 2358 / NCIMB 9240 / NCTC 8049).